Consider the following 539-residue polypeptide: Kynureninase 2 (539 aa).

Residues 60 to 87 form a disordered region; sequence DGGVAGETKEPRVPNGVSSATKPNGTVN. Residues 75–87 show a composition bias toward polar residues; it reads GVSSATKPNGTVN. Pyridoxal 5'-phosphate contacts are provided by residues L171, T172, 199 to 202, D290, H293, and Y315; that span reads FPSD. An N6-(pyridoxal phosphate)lysine modification is found at K316. Residues 340–352 are compositionally biased toward gly residues; it reads GGGGSGGVGGGRG. Residues 340–363 form a disordered region; it reads GGGGSGGVGGGRGEGGDGDGGDGG. Residues W379 and N407 each contribute to the pyridoxal 5'-phosphate site.

Belongs to the kynureninase family. Homodimer. Requires pyridoxal 5'-phosphate as cofactor.

It localises to the cytoplasm. The catalysed reaction is L-kynurenine + H2O = anthranilate + L-alanine + H(+). It carries out the reaction 3-hydroxy-L-kynurenine + H2O = 3-hydroxyanthranilate + L-alanine + H(+). Its pathway is amino-acid degradation; L-kynurenine degradation; L-alanine and anthranilate from L-kynurenine: step 1/1. The protein operates within cofactor biosynthesis; NAD(+) biosynthesis; quinolinate from L-kynurenine: step 2/3. Catalyzes the cleavage of L-kynurenine (L-Kyn) and L-3-hydroxykynurenine (L-3OHKyn) into anthranilic acid (AA) and 3-hydroxyanthranilic acid (3-OHAA), respectively. This is Kynureninase 2 from Chaetomium globosum (strain ATCC 6205 / CBS 148.51 / DSM 1962 / NBRC 6347 / NRRL 1970) (Soil fungus).